Here is a 249-residue protein sequence, read N- to C-terminus: Type III pantothenate kinase (249 aa).

6 to 13 (DVGNTHTT) is a binding site for ATP. Residue 101 to 104 (GADR) participates in substrate binding. Aspartate 103 acts as the Proton acceptor in catalysis. Position 123 (aspartate 123) interacts with K(+). ATP is bound at residue threonine 126. Threonine 177 lines the substrate pocket.

It belongs to the type III pantothenate kinase family. Homodimer. The cofactor is NH4(+). It depends on K(+) as a cofactor.

It localises to the cytoplasm. It catalyses the reaction (R)-pantothenate + ATP = (R)-4'-phosphopantothenate + ADP + H(+). The protein operates within cofactor biosynthesis; coenzyme A biosynthesis; CoA from (R)-pantothenate: step 1/5. Catalyzes the phosphorylation of pantothenate (Pan), the first step in CoA biosynthesis. The polypeptide is Type III pantothenate kinase (Thermosipho africanus (strain TCF52B)).